Reading from the N-terminus, the 96-residue chain is Antitoxin TacA3 (96 aa).

The neutralization domain stretch occupies residues 61–96 (YLTERDTKMIMEILDNPPAPNEKLLAAAFALPDMKK).

The protein belongs to the TacA antitoxin family. As to quaternary structure, forms a complex with cognate toxin TacT3. Forms a 4:2 antitoxin:toxin complex with cognate toxin TacT3. Forms a 4:4 antitoxin:toxin complex with promoter DNA, where 2 TacT3 dimers bridge 2 TacA3 dimers. Only TacA3 contacts promoter DNA.

Functionally, antitoxin component of a type II toxin-antitoxin (TA) system. Counteracts the toxic effect of cognate toxin TacT3, but not TacT1 or TacT2. Plays a role in persister cell formation. Its function is as follows. The TacA3-TacT3 complex both represses and derepresses expression of its own operon. The hexameric 4:2 TacA3-TacT3 complex binds promoter DNA and represses its transcription; both subunits are required. The octomeric 4:4 TacA3-TacT3 complex derepresses the operon. The shift from hexameric to octomeric complex probably alters DNA-binding, leading to dissociation from the operator DNA and derepression. Does not bind the promoter of the TacA1-TacT1 operon. The sequence is that of Antitoxin TacA3 from Salmonella typhimurium (strain 14028s / SGSC 2262).